Consider the following 457-residue polypeptide: Argininosuccinate lyase (457 aa).

Belongs to the lyase 1 family. Argininosuccinate lyase subfamily.

The protein localises to the cytoplasm. The enzyme catalyses 2-(N(omega)-L-arginino)succinate = fumarate + L-arginine. The protein operates within amino-acid biosynthesis; L-arginine biosynthesis; L-arginine from L-ornithine and carbamoyl phosphate: step 3/3. In Exiguobacterium sibiricum (strain DSM 17290 / CCUG 55495 / CIP 109462 / JCM 13490 / 255-15), this protein is Argininosuccinate lyase.